The sequence spans 443 residues: Xaa-Pro dipeptidase (443 aa).

Mn(2+) is bound by residues Asp246, Asp257, His339, Glu384, and Glu423.

It belongs to the peptidase M24B family. Bacterial-type prolidase subfamily. Mn(2+) serves as cofactor.

The catalysed reaction is Xaa-L-Pro dipeptide + H2O = an L-alpha-amino acid + L-proline. Functionally, splits dipeptides with a prolyl residue in the C-terminal position. This chain is Xaa-Pro dipeptidase, found in Klebsiella pneumoniae subsp. pneumoniae (strain ATCC 700721 / MGH 78578).